A 303-amino-acid polypeptide reads, in one-letter code: N-acetyl-D-glucosamine kinase (303 aa).

Residues 4–11 (GFDIGGTK) and 133–140 (GVGGGLIF) each bind ATP. Residues His-157, Cys-177, Cys-179, and Cys-184 each contribute to the Zn(2+) site.

This sequence belongs to the ROK (NagC/XylR) family. NagK subfamily.

It catalyses the reaction N-acetyl-D-glucosamine + ATP = N-acetyl-D-glucosamine 6-phosphate + ADP + H(+). Its pathway is cell wall biogenesis; peptidoglycan recycling. In terms of biological role, catalyzes the phosphorylation of N-acetyl-D-glucosamine (GlcNAc) derived from cell-wall degradation, yielding GlcNAc-6-P. The protein is N-acetyl-D-glucosamine kinase of Escherichia fergusonii (strain ATCC 35469 / DSM 13698 / CCUG 18766 / IAM 14443 / JCM 21226 / LMG 7866 / NBRC 102419 / NCTC 12128 / CDC 0568-73).